Here is a 505-residue protein sequence, read N- to C-terminus: Nicotinamide phosphoribosyltransferase (505 aa).

Residue arginine 196 participates in diphosphate binding. A beta-nicotinamide D-ribonucleotide-binding site is contributed by aspartate 219. Positions 246 and 314 each coordinate diphosphate. Beta-nicotinamide D-ribonucleotide contacts are provided by residues 314–316 (RPD), 369–370 (GD), and arginine 408.

This sequence belongs to the NAPRTase family.

It catalyses the reaction beta-nicotinamide D-ribonucleotide + diphosphate = 5-phospho-alpha-D-ribose 1-diphosphate + nicotinamide + H(+). The protein operates within cofactor biosynthesis; NAD(+) biosynthesis; nicotinamide D-ribonucleotide from 5-phospho-alpha-D-ribose 1-diphosphate and nicotinamide: step 1/1. With respect to regulation, 10-fold more active in the presence of saturating ATP. Catalyzes the condensation of nicotinamide with 5-phosphoribosyl-1-pyrophosphate to yield nicotinamide mononucleotide, an intermediate in the biosynthesis of NAD. Functions in the nondeamidating salvage pathway for production of NAD from nicotinamide. Displays a strict preference for nicotinamide over nicotinate substrate. This is Nicotinamide phosphoribosyltransferase from Acinetobacter baylyi (strain ATCC 33305 / BD413 / ADP1).